A 112-amino-acid polypeptide reads, in one-letter code: Nitrogen regulatory protein P-II (112 aa).

Tyrosine 51 is subject to O-UMP-tyrosine.

The protein belongs to the P(II) protein family. In terms of assembly, homotrimer.

Functionally, in nitrogen-limiting conditions, when the ratio of Gln to 2-ketoglutarate decreases, P-II is uridylylated to P-II-UMP. P-II-UMP allows the deadenylation of glutamine synthetase (GS), thus activating the enzyme. Conversely, in nitrogen excess P-II is deuridylated and promotes the adenylation of GS. P-II indirectly controls the transcription of the GS gene (glnA). P-II prevents NR-II-catalyzed conversion of NR-I to NR-I-phosphate, the transcriptional activator of glnA. When P-II is uridylylated to P-II-UMP, these events are reversed. In Mycobacterium bovis (strain ATCC BAA-935 / AF2122/97), this protein is Nitrogen regulatory protein P-II (glnB).